Consider the following 926-residue polypeptide: Ubiquitin carboxyl-terminal hydrolase 4 (926 aa).

Residues 205–328 (SQMEILLIDI…WLKSNYGRQV (124 aa)) enclose the Rhodanese domain. The residue at position 443 (S443) is a Phosphoserine. Residues 562-923 (VGLENLGNSC…NAYVLFYHRV (362 aa)) enclose the USP domain. C571 serves as the catalytic Nucleophile. H880 serves as the catalytic Proton acceptor.

This sequence belongs to the peptidase C19 family. In terms of assembly, interacts with BRO1, RFU1 and VPS32. Associates with the 26S proteasome.

The protein localises to the cytoplasm. The protein resides in the late endosome membrane. It catalyses the reaction Thiol-dependent hydrolysis of ester, thioester, amide, peptide and isopeptide bonds formed by the C-terminal Gly of ubiquitin (a 76-residue protein attached to proteins as an intracellular targeting signal).. RFU1 is an inhibitor of deubiquitination activity. Functionally, ubiquitin thioesterase that acts at the late endosome/prevacuolar compartment to recover ubiquitin from ubiquitinated membrane proteins en route to the vacuole. Also removes ubiquitin from soluble proteins targeted to proteasomes. Is essential to maintain a normal level of free ubiquitin. Involved in the ammonium-induced down-regulation of the GAP1 permease and the UME3 destruction in response to oxidative stress. Has a role in the RAD9 checkpoint response to TOP1 poisons. Required for promoting coordination of DNA replication and avoids DNA overreplication. This chain is Ubiquitin carboxyl-terminal hydrolase 4 (DOA4), found in Saccharomyces cerevisiae (strain RM11-1a) (Baker's yeast).